A 56-amino-acid chain; its full sequence is IFNKAYRKVLGQLSARKYLHSLMHSDGIFTDSYSRYRKQMAVKKYLAAVLGKRYKQ.

Residues valine 42 to leucine 50 form an important for receptor binding region. Leucine 50 is modified (leucine amide).

It belongs to the glucagon family. Interacts with ADCYAP1R1 (via N-terminal extracellular domain).

The protein resides in the secreted. In terms of biological role, PACAP is a neuropeptide involved in diverse array of physiological processes through activating the PACAP subfamily of class B1 G protein-coupled receptors: VIP receptor 1 (VIPR1), VIP receptor 2 (VIPR2), and PACAP type I receptor (ADCYAP1R1). Exerts neuroprotective and general cytoprotective effects due to anti-apoptotic, anti-inflammatory, and antioxidant actions. This Heloderma suspectum (Gila monster) protein is Pituitary adenylate cyclase-activating polypeptide (Adcyap1).